Consider the following 302-residue polypeptide: MDQKRLTHLRQLEAESIHIIREVAAEFANPVMLYSIGKDSSVMLHLARKAFYPGTLPFPLLHVDTGWKFREMYAFRDRTANTYGCELLVHKNPEGVAMDINPFVHGSAKHTDIMKTEGLKQALNKYGFDAAFGGARRDEEKSRAKERIYSFRDRFHRWDPKNQRPELWRNYNGQINTGESIRVFPLSNWTEQDIWQYIWLENIEIVPLYLAAERPVLERDGMLMMVDDDRIDLQPGEVIKKRMVRFRTLGCWPLTGAVESHAQTLPEIIEEMLVSTTSERQGRVIDRDQAGSMELKKRQGYF.

This sequence belongs to the PAPS reductase family. CysD subfamily. In terms of assembly, heterodimer composed of CysD, the smaller subunit, and CysN.

It carries out the reaction sulfate + ATP + H(+) = adenosine 5'-phosphosulfate + diphosphate. It functions in the pathway sulfur metabolism; hydrogen sulfide biosynthesis; sulfite from sulfate: step 1/3. In terms of biological role, with CysN forms the ATP sulfurylase (ATPS) that catalyzes the adenylation of sulfate producing adenosine 5'-phosphosulfate (APS) and diphosphate, the first enzymatic step in sulfur assimilation pathway. APS synthesis involves the formation of a high-energy phosphoric-sulfuric acid anhydride bond driven by GTP hydrolysis by CysN coupled to ATP hydrolysis by CysD. This Salmonella arizonae (strain ATCC BAA-731 / CDC346-86 / RSK2980) protein is Sulfate adenylyltransferase subunit 2.